The following is a 247-amino-acid chain: Adenosylcobinamide-GDP ribazoletransferase (247 aa).

Helical transmembrane passes span I34 to V54, C59 to F79, G113 to L133, I138 to Y158, and V194 to I214.

Belongs to the CobS family. It depends on Mg(2+) as a cofactor.

Its subcellular location is the cell inner membrane. The enzyme catalyses alpha-ribazole + adenosylcob(III)inamide-GDP = adenosylcob(III)alamin + GMP + H(+). The catalysed reaction is alpha-ribazole 5'-phosphate + adenosylcob(III)inamide-GDP = adenosylcob(III)alamin 5'-phosphate + GMP + H(+). It functions in the pathway cofactor biosynthesis; adenosylcobalamin biosynthesis; adenosylcobalamin from cob(II)yrinate a,c-diamide: step 7/7. In terms of biological role, joins adenosylcobinamide-GDP and alpha-ribazole to generate adenosylcobalamin (Ado-cobalamin). Also synthesizes adenosylcobalamin 5'-phosphate from adenosylcobinamide-GDP and alpha-ribazole 5'-phosphate. The protein is Adenosylcobinamide-GDP ribazoletransferase of Escherichia coli (strain 55989 / EAEC).